The primary structure comprises 963 residues: Seizure 6-like protein (963 aa).

A signal peptide spans 1 to 31 (MPVARPQAAGPDRISLFLVAFLLGSPAAAQA). Disordered regions lie at residues 28 to 63 (AAQA…GVTS), 116 to 150 (RPLA…TAPA), and 164 to 204 (LPHS…TTTS). The Extracellular portion of the chain corresponds to 32 to 897 (EDGGPEGEMH…ESSLEGGNMA (866 aa)). A compositionally biased stretch (low complexity) spans 47–59 (LLPSASLESSLEE). The segment covering 120–135 (TPTTLQRLGSPASATT) has biased composition (polar residues). A compositionally biased stretch (low complexity) spans 191–204 (TGSASEESQETTTS). Cys221 and Cys248 are disulfide-bonded. Positions 221-329 (CGVSFSDPEG…GTFQLHYQAF (109 aa)) constitute a CUB 1 domain. Asn251, Asn268, and Asn290 each carry an N-linked (GlcNAc...) asparagine glycan. The region spanning 331 to 390 (LSCPFPRRPDAGEVTVMDLHSGGVAHFHCHLGYELQGAKTLTCINASKPHWSSQEPVCSA) is the Sushi 1 domain. 3 disulfides stabilise this stretch: Cys333–Cys373, Cys359–Cys388, and Cys392–Cys419. 6 N-linked (GlcNAc...) asparagine glycosylation sites follow: Asn375, Asn398, Asn414, Asn454, Asn516, and Asn558. Positions 392–502 (CGGAVHNATI…SAFNIRFEAF (111 aa)) constitute a CUB 2 domain. The region spanning 505-566 (GHCYEPYIQN…WNDTEPLCRA (62 aa)) is the Sushi 2 domain. Intrachain disulfides connect Cys507-Cys549, Cys534-Cys564, and Cys568-Cys594. Residues 568–679 (CGGELSAVAG…QGFIMNYIEV (112 aa)) form the CUB 3 domain. N-linked (GlcNAc...) asparagine glycans are attached at residues Asn614 and Asn682. 3 consecutive Sushi domains span residues 683–742 (DSCS…FCEK), 744–807 (MYCT…HCVS), and 811–872 (LACD…ICKV). Cystine bridges form between Cys685–Cys727, Cys713–Cys740, Cys746–Cys788, Cys774–Cys805, Cys813–Cys855, and Cys841–Cys870. The chain crosses the membrane as a helical span at residues 898-918 (LAIFIPVLLISLLLGGAYIYV). At 919-963 (TRCRQYSSLRLPLMYSHPYSQITVETEFDNPIYETGETREYEVSI) the chain is on the cytoplasmic side.

The protein belongs to the SEZ6 family. In terms of tissue distribution, expressed exclusively in the brain, predominantly in neurons. Wide expression in the gray matter of the brain with high levels in the olfactory bulb, anterior olfactory nuclei, hippocampal formation and cerebellar cortex. Detected diffusely and weakly in the white matter, such as the corpus callosum and cerebellar medulla. In the cerebellar cortex, intensely expressed in Purkinje cells and granule cells. Detected also in interneurons in the molecular layer.

The protein resides in the cell membrane. It localises to the endoplasmic reticulum membrane. Candidate tumor suppressor gene. May contribute to specialized endoplasmic reticulum functions in neurons. This is Seizure 6-like protein (Sez6l) from Mus musculus (Mouse).